Here is a 299-residue protein sequence, read N- to C-terminus: Zeta-sarcoglycan (299 aa).

At 1–37 the chain is on the cytoplasmic side; it reads MTREQYILATQQNNLPRTENAQLYPVGIYGWRKRCLY. A helical; Signal-anchor for type II membrane protein membrane pass occupies residues 38 to 58; the sequence is FFVLLLLVTMIVNLAMTIWIL. Over 59-299 the chain is Extracellular; sequence KVMNFTVDGM…QSSSNICLWS (241 aa). Asparagine 62 and asparagine 110 each carry an N-linked (GlcNAc...) asparagine glycan. Residues cysteine 273 and cysteine 289 are joined by a disulfide bond.

It belongs to the sarcoglycan beta/delta/gamma/zeta family.

The protein localises to the cell membrane. The protein resides in the sarcolemma. Its subcellular location is the cytoplasm. It is found in the cytoskeleton. In terms of biological role, component of the sarcoglycan complex, a subcomplex of the dystrophin-glycoprotein complex which forms a link between the F-actin cytoskeleton and the extracellular matrix. May play a role in the maintenance of striated muscle membrane stability. This chain is Zeta-sarcoglycan (SGCZ), found in Homo sapiens (Human).